Here is a 536-residue protein sequence, read N- to C-terminus: Phosphoenolpyruvate carboxykinase (ATP) (536 aa).

Substrate-binding residues include R61, Y195, and K201. ATP contacts are provided by residues K201, H220, and 236-244 (GLSGTGKTT). Mn(2+)-binding residues include K201 and H220. Position 257 (D257) interacts with Mn(2+). 3 residues coordinate ATP: E285, R322, and T447. Substrate is bound at residue R322.

It belongs to the phosphoenolpyruvate carboxykinase (ATP) family. Mn(2+) serves as cofactor.

Its subcellular location is the cytoplasm. It carries out the reaction oxaloacetate + ATP = phosphoenolpyruvate + ADP + CO2. The protein operates within carbohydrate biosynthesis; gluconeogenesis. In terms of biological role, involved in the gluconeogenesis. Catalyzes the conversion of oxaloacetate (OAA) to phosphoenolpyruvate (PEP) through direct phosphoryl transfer between the nucleoside triphosphate and OAA. The protein is Phosphoenolpyruvate carboxykinase (ATP) of Rhizobium rhizogenes (strain K84 / ATCC BAA-868) (Agrobacterium radiobacter).